We begin with the raw amino-acid sequence, 611 residues long: Inhibitor of apoptosis protein (611 aa).

BIR repeat units follow at residues 30–97 (ELYR…CSFV), 176–242 (EEAR…CPFV), and 262–329 (HEAR…CEYL). Positions 299, 302, 319, and 326 each coordinate Zn(2+). The CARD domain maps to 446-536 (VASDDLSLIR…VLYKDLFVEK (91 aa)). The RING-type zinc finger occupies 564 to 599 (CKVCMDKEVSIVFIPCGHLVVCKECAPSLRKCPICR).

It belongs to the IAP family. Cells of the T-lymphocyte lineage. Found in both cortical and medullary cells of the thymus. Expressed at relatively high levels also in spleen, bursa, intestine and lung and at very low levels in testis, brain and skeletal muscle.

It localises to the nucleus. The protein resides in the cytoplasm. Apoptotic suppressor. This Gallus gallus (Chicken) protein is Inhibitor of apoptosis protein (ITA).